A 557-amino-acid polypeptide reads, in one-letter code: Hepatocyte nuclear factor 1-beta (557 aa).

The dimerization stretch occupies residues 1-31 (MVSKLTSLQQELLSALLSSGVTKEVLIQALE). The HNF-p1 domain occupies 1-32 (MVSKLTSLQQELLSALLSSGVTKEVLIQALEE). Phosphoserine is present on residues serine 49, serine 52, serine 75, and serine 80. The disordered stretch occupies residues 66-85 (TNGHAKGRLSGDEGSEDGDD). The POU-specific atypical domain occupies 93–188 (KELQALNTEE…ILRQFNQTVQ (96 aa)). A DNA-binding region (homeobox; HNF1-type) is located at residues 231–311 (MRRNRFKWGP…NRRKEEAFRQ (81 aa)). A disordered region spans residues 324-370 (HNLNPLLTHGSPHHQPSSSPPNKLSGVRYSQPGNNEVTSSSTISHHG). The span at 354–370 (QPGNNEVTSSSTISHHG) shows a compositional bias: polar residues.

Belongs to the HNF1 homeobox family. In terms of assembly, binds DNA as a dimer. Can form homodimer or heterodimer with HNF1-alpha. Interacts (via HNF-p1 domain) with PCBD1; the interaction increases its transactivation activity. In terms of tissue distribution, liver, kidney and intestine.

Its subcellular location is the nucleus. Transcription factor that binds to the inverted palindrome 5'-GTTAATNATTAAC-3'. Binds to the FPC element in the cAMP regulatory unit of the PLAU gene. Transcriptional activity is increased by coactivator PCBD1. The chain is Hepatocyte nuclear factor 1-beta (Hnf1b) from Rattus norvegicus (Rat).